Reading from the N-terminus, the 427-residue chain is Methylenetetrahydrofolate--tRNA-(uracil-5-)-methyltransferase TrmFO (427 aa).

Position 8–13 (8–13 (GAGISG)) interacts with FAD.

Belongs to the MnmG family. TrmFO subfamily. It depends on FAD as a cofactor.

The protein resides in the cytoplasm. The enzyme catalyses uridine(54) in tRNA + (6R)-5,10-methylene-5,6,7,8-tetrahydrofolate + NADH + H(+) = 5-methyluridine(54) in tRNA + (6S)-5,6,7,8-tetrahydrofolate + NAD(+). It carries out the reaction uridine(54) in tRNA + (6R)-5,10-methylene-5,6,7,8-tetrahydrofolate + NADPH + H(+) = 5-methyluridine(54) in tRNA + (6S)-5,6,7,8-tetrahydrofolate + NADP(+). In terms of biological role, catalyzes the folate-dependent formation of 5-methyl-uridine at position 54 (M-5-U54) in all tRNAs. The chain is Methylenetetrahydrofolate--tRNA-(uracil-5-)-methyltransferase TrmFO from Mycoplasmopsis agalactiae (strain NCTC 10123 / CIP 59.7 / PG2) (Mycoplasma agalactiae).